Here is a 290-residue protein sequence, read N- to C-terminus: Acetyl-coenzyme A carboxylase carboxyl transferase subunit beta (290 aa).

The CoA carboxyltransferase N-terminal domain occupies 27–290 (LWHKCPSCEA…FTHSPSPVSA (264 aa)). The Zn(2+) site is built by cysteine 31, cysteine 34, cysteine 50, and cysteine 53. Residues 31–53 (CPSCEAVLYRPELEKTLDVCPKC) form a C4-type zinc finger.

Belongs to the AccD/PCCB family. As to quaternary structure, acetyl-CoA carboxylase is a heterohexamer composed of biotin carboxyl carrier protein (AccB), biotin carboxylase (AccC) and two subunits each of ACCase subunit alpha (AccA) and ACCase subunit beta (AccD). Zn(2+) serves as cofactor.

It is found in the cytoplasm. The enzyme catalyses N(6)-carboxybiotinyl-L-lysyl-[protein] + acetyl-CoA = N(6)-biotinyl-L-lysyl-[protein] + malonyl-CoA. It participates in lipid metabolism; malonyl-CoA biosynthesis; malonyl-CoA from acetyl-CoA: step 1/1. Functionally, component of the acetyl coenzyme A carboxylase (ACC) complex. Biotin carboxylase (BC) catalyzes the carboxylation of biotin on its carrier protein (BCCP) and then the CO(2) group is transferred by the transcarboxylase to acetyl-CoA to form malonyl-CoA. The sequence is that of Acetyl-coenzyme A carboxylase carboxyl transferase subunit beta from Pseudomonas aeruginosa (strain UCBPP-PA14).